A 262-amino-acid polypeptide reads, in one-letter code: Acyl-coenzyme A diphosphatase FITM2 (262 aa).

Residues methionine 1–histidine 23 are Cytoplasmic-facing. A helical membrane pass occupies residues leucine 24–leucine 44. Over proline 45 to asparagine 57 the chain is Lumenal. A helical membrane pass occupies residues valine 58–leucine 78. At threonine 79–arginine 93 the chain is on the cytoplasmic side. Residues leucine 94–isoleucine 114 form a helical membrane-spanning segment. The Lumenal segment spans residues glutamate 115–glycine 145. A helical membrane pass occupies residues phenylalanine 146–isoleucine 166. Histidine 155 is an active-site residue. Over valine 167–threonine 190 the chain is Cytoplasmic. A helical transmembrane segment spans residues leucine 191 to valine 211. At tyrosine 212–glutamine 218 the chain is on the lumenal side. Residue histidine 214 is part of the active site. Residues lysine 219–leucine 239 traverse the membrane as a helical segment. Residues lysine 240 to lysine 262 are Cytoplasmic-facing.

Belongs to the FIT family. As to expression, widely expressed, with highest levels in white and brown adipose tissues (at protein level). In the heart, mRNA expression levels do not correlate well with protein levels, suggesting post-transcriptional regulation in this organ.

It localises to the endoplasmic reticulum membrane. The catalysed reaction is an acyl-CoA + H2O = an acyl-4'-phosphopantetheine + adenosine 3',5'-bisphosphate + 2 H(+). It catalyses the reaction (9Z)-octadecenoyl-CoA + H2O = S-(9Z-octadecenoyl)-4'-phosphopantetheine + adenosine 3',5'-bisphosphate + 2 H(+). It carries out the reaction (5Z,8Z,11Z,14Z)-eicosatetraenoyl-CoA + H2O = S-(5Z,8Z,11Z,14Z-eicosatetraenoyl)-4'-phosphopantetheine + adenosine 3',5'-bisphosphate + 2 H(+). The enzyme catalyses hexadecanoyl-CoA + H2O = S-hexadecanoyl-4'-phosphopantetheine + adenosine 3',5'-bisphosphate + 2 H(+). In terms of biological role, fatty acyl-coenzyme A (CoA) diphosphatase that hydrolyzes fatty acyl-CoA to yield acyl-4'-phosphopantetheine and adenosine 3',5'-bisphosphate. Preferentially hydrolyzes unsaturated long-chain acyl-CoA substrates such as oleoyl-CoA/(9Z)-octadecenoyl-CoA and arachidonoyl-CoA/(5Z,8Z,11Z,14Z)-eicosatetraenoyl-CoA in the endoplasmic reticulum (ER) lumen. This catalytic activity is required for maintaining ER structure and for lipid droplets (LDs) biogenesis, which are lipid storage organelles involved in maintaining lipid and energy homeostasis. Directly binds to diacylglycerol (DAGs) and triacylglycerol, which is also important for LD biogenesis. May support directional budding of nacent LDs from the ER into the cytosol by reducing DAG levels at sites of LD formation. Plays a role in the regulation of cell morphology and cytoskeletal organization. In Mus musculus (Mouse), this protein is Acyl-coenzyme A diphosphatase FITM2.